A 114-amino-acid chain; its full sequence is FK506-binding protein 1 (114 aa).

A PPIase FKBP-type domain is found at 26–114 (GDLVTIHYTG…VFDVELLKIN (89 aa)).

It belongs to the FKBP-type PPIase family. FKBP1 subfamily.

The protein localises to the cytoplasm. It catalyses the reaction [protein]-peptidylproline (omega=180) = [protein]-peptidylproline (omega=0). Inhibited by both FK506 and rapamycin. PPIases accelerate the folding of proteins. It catalyzes the cis-trans isomerization of proline imidic peptide bonds in oligopeptides. This chain is FK506-binding protein 1 (FPR1), found in Kluyveromyces lactis (strain ATCC 8585 / CBS 2359 / DSM 70799 / NBRC 1267 / NRRL Y-1140 / WM37) (Yeast).